The following is an 89-amino-acid chain: Small ribosomal subunit protein uS15 (89 aa).

The protein belongs to the universal ribosomal protein uS15 family. Part of the 30S ribosomal subunit. Forms a bridge to the 50S subunit in the 70S ribosome, contacting the 23S rRNA.

Functionally, one of the primary rRNA binding proteins, it binds directly to 16S rRNA where it helps nucleate assembly of the platform of the 30S subunit by binding and bridging several RNA helices of the 16S rRNA. Forms an intersubunit bridge (bridge B4) with the 23S rRNA of the 50S subunit in the ribosome. This chain is Small ribosomal subunit protein uS15, found in Heliobacterium modesticaldum (strain ATCC 51547 / Ice1).